The sequence spans 1503 residues: Translocase of chloroplast 159, chloroplastic (1503 aa).

The span at 1-24 (MDSKSVTPEPTNPFYASSGQSGKT) shows a compositional bias: polar residues. The disordered stretch occupies residues 1 to 210 (MDSKSVTPEP…GGKVDVDDKS (210 aa)). A helical membrane pass occupies residues 21–37 (SGKTYASVVAAAAAAAA). A Phosphoserine modification is found at Ser-71. 2 stretches are compositionally biased toward basic and acidic residues: residues 85–98 (KVSDEVDGSLKEDS) and 176–210 (SESKVKDVEEEDVGTKKDDEGESELGGKVDVDDKS). A phosphoserine mark is found at Ser-210, Ser-281, and Ser-288. 2 disordered regions span residues 298 to 338 (KFTS…DVEK) and 429 to 464 (VHNKFDPIGQGEGGEVELESDKATEEGGGKLVSEGD). The span at 447–456 (ESDKATEEGG) shows a compositional bias: basic and acidic residues. Phosphoserine occurs at positions 448, 461, 589, 609, 630, 632, and 665. The disordered stretch occupies residues 610–633 (FGGKEVDQEPSGEGVTRVDGSESE). Residues 781–804 (EEEKQKLEKLQSLRVKFLRLLQRL) are a coiled coil. One can recognise an AIG1-type G domain in the interval 853–1087 (IFSLNILVLG…RPQEPLDHRK (235 aa)). The tract at residues 862–869 (GKAGVGKS) is G1. GTP-binding positions include 865-870 (GVGKSA) and 884-889 (DAFGLS). Position 869 (Ser-869) interacts with Mg(2+). The homodimerization stretch occupies residues 884–887 (DAFG). Residues 889–893 (STTSV) form a G2 region. The G3 stretch occupies residues 909–912 (DTPG). Residues 947–952 (RLDTQT) form a homodimerization region. The interval 981–984 (THAA) is G4. GTP is bound by residues His-982 and 1035-1036 (EN). Positions 1035-1037 (ENH) are G5. Positions 1175–1203 (DYRVKLLQKKQWREELKRMKEMKKNGKKL) form a coiled coil. The interval 1203–1222 (LGESEFGYPGEEDDPENGAP) is disordered.

This sequence belongs to the TRAFAC class TrmE-Era-EngA-EngB-Septin-like GTPase superfamily. AIG1/Toc34/Toc159-like paraseptin GTPase family. TOC159 subfamily. In terms of assembly, homodimer and heterodimer with TOC33. Part of the TOC core complex that includes 1 protein for the specific recognition of transit peptides surrounded by a ring composed of four proteins forming translocation channels, and four to five GTP-binding proteins providing energy. This core complex can interact with components of the TIC complex to form a larger import complex. Chloroplastic protein precursor such as prSS (precursor of the RuBisCO small subunit) interacts with these complexes. The TOC complex contains a specific subset of polar lipids such as digalactosyldiacylglyceride (DGDG), phosphatidylcholine (PC) and phosphatidylglycerol (PG). Interacts with SP1. The cofactor is Mg(2+). In terms of processing, phosphorylated by KOC1.

Its subcellular location is the plastid. It is found in the chloroplast outer membrane. The protein localises to the cytoplasm. Functionally, GTPase involved in protein precursor import into chloroplasts. Seems to recognize chloroplast-destined precursor proteins and regulate their presentation to the translocation channel through GTP hydrolysis. Required for chloroplast biogenesis. Probably specialized in the import of nuclear encoded photosynthetic preproteins from the cytoplasm to the chloroplast. The polypeptide is Translocase of chloroplast 159, chloroplastic (Arabidopsis thaliana (Mouse-ear cress)).